Here is a 310-residue protein sequence, read N- to C-terminus: Membrane protein insertase YidC 2 (310 aa).

Residues 1-23 form the signal peptide; the sequence is MKKTLKRILFSSLSLSILLLLTG. Cys24 carries N-palmitoyl cysteine lipidation. Cys24 is lipidated: S-diacylglycerol cysteine. 5 consecutive transmembrane segments (helical) span residues 33–53, 58–78, 135–155, 180–200, and 219–239; these read PYGVIWNTLGVPMANLITYFA, LGFGVAIIIVTIIVRVIILPL, FGGIGCLPLLIQMPFFSAIFF, LTVIIAILYFVQSWLSMQGVP, and VFMSISLPASVALYWFIGGIF. Residues 262-310 are disordered; sequence EYTKNPPKAYKSNNARKDVTSSTKTTESNQAIITSKKTNRNAGKQKRRG. Residues 281–297 show a composition bias toward polar residues; the sequence is TSSTKTTESNQAIITSK. The segment covering 298–310 has biased composition (basic residues); it reads KTNRNAGKQKRRG.

This sequence belongs to the OXA1/ALB3/YidC family. Type 2 subfamily.

The protein localises to the cell membrane. Required for the insertion and/or proper folding and/or complex formation of integral membrane proteins into the membrane. Involved in integration of membrane proteins that insert both dependently and independently of the Sec translocase complex, as well as at least some lipoproteins. In Streptococcus agalactiae serotype III (strain NEM316), this protein is Membrane protein insertase YidC 2.